Here is a 1110-residue protein sequence, read N- to C-terminus: Guanylate cyclase 2D (1110 aa).

Positions M1–A66 are cleaved as a signal peptide. Over R67 to Q475 the chain is Extracellular. The cysteines at positions 121 and 149 are disulfide-linked. Residues N304 and N374 are each glycosylated (N-linked (GlcNAc...) asparagine). Residues P476–I500 traverse the membrane as a helical segment. Residues R501–G1110 lie on the Cytoplasmic side of the membrane. The segment at T529–I556 is disordered. A Protein kinase domain is found at S541–F818. Residues M880–L921 are interaction with NCALD. The Guanylate cyclase domain occupies T893–E1023.

It belongs to the adenylyl cyclase class-4/guanylyl cyclase family. In terms of assembly, interacts (via the catalytic domain) with NCALD. As to expression, specifically expressed in a subpopulation of olfactory sensory neurons. Expressed in the cilia of the olfactory epithelium.

The protein localises to the cell projection. It localises to the cilium membrane. It catalyses the reaction GTP = 3',5'-cyclic GMP + diphosphate. Activated by Ca(2+). Activated by NCALD in a Ca(2+)-dependent fashion. Functionally, functions as an olfactory receptor activated by a urine odorant, uroguanylin. Activated as well by the volatile semiochemicals carbon disulfide (CS2) and carbon dioxide (CO2). Has guanylate cyclase activity upon binding of the ligand. Activation of GUCY2D neurons leads to the cGMP-dependent activation of the CNGA3 channels, membrane depolarization and an increase in action potential frequency. Signaling pathways activated by GUCY2D may trigger social behaviors such as acquisition of food preference. The chain is Guanylate cyclase 2D (Gucy2d) from Rattus norvegicus (Rat).